Reading from the N-terminus, the 1368-residue chain is DNA-directed RNA polymerase subunit beta (1368 aa).

This sequence belongs to the RNA polymerase beta chain family. As to quaternary structure, the RNAP catalytic core consists of 2 alpha, 1 beta, 1 beta' and 1 omega subunit. When a sigma factor is associated with the core the holoenzyme is formed, which can initiate transcription.

The enzyme catalyses RNA(n) + a ribonucleoside 5'-triphosphate = RNA(n+1) + diphosphate. Functionally, DNA-dependent RNA polymerase catalyzes the transcription of DNA into RNA using the four ribonucleoside triphosphates as substrates. The polypeptide is DNA-directed RNA polymerase subunit beta (Cupriavidus metallidurans (strain ATCC 43123 / DSM 2839 / NBRC 102507 / CH34) (Ralstonia metallidurans)).